The chain runs to 202 residues: N-(5'-phosphoribosyl)anthranilate isomerase (202 aa).

This sequence belongs to the TrpF family.

It catalyses the reaction N-(5-phospho-beta-D-ribosyl)anthranilate = 1-(2-carboxyphenylamino)-1-deoxy-D-ribulose 5-phosphate. It functions in the pathway amino-acid biosynthesis; L-tryptophan biosynthesis; L-tryptophan from chorismate: step 3/5. In Geobacter metallireducens (strain ATCC 53774 / DSM 7210 / GS-15), this protein is N-(5'-phosphoribosyl)anthranilate isomerase.